The primary structure comprises 316 residues: protein SLOW GREEN 1, chloroplastic (316 aa).

Residues 1-39 (MISSLSASSSLVSSFVAVKATPVTGPLIPRRDLLSIRIR) constitute a chloroplast transit peptide. TPR repeat units follow at residues 118-151 (VETL…QPEE), 152-185 (TEWK…NPLS), 226-259 (RDVR…DPKD), and 261-293 (RPYF…SPKK).

As to expression, ubiquitous. Preferentially expressed in newly formed green tissues.

Its subcellular location is the plastid. It is found in the chloroplast. Functionally, required for the early stage of chloroplast development. May be involved in chloroplast protein biosynthesis and/or degradation. The protein is protein SLOW GREEN 1, chloroplastic of Arabidopsis thaliana (Mouse-ear cress).